A 94-amino-acid polypeptide reads, in one-letter code: Co-chaperonin GroES (94 aa).

This sequence belongs to the GroES chaperonin family. In terms of assembly, heptamer of 7 subunits arranged in a ring. Interacts with the chaperonin GroEL.

It is found in the cytoplasm. Functionally, together with the chaperonin GroEL, plays an essential role in assisting protein folding. The GroEL-GroES system forms a nano-cage that allows encapsulation of the non-native substrate proteins and provides a physical environment optimized to promote and accelerate protein folding. GroES binds to the apical surface of the GroEL ring, thereby capping the opening of the GroEL channel. This chain is Co-chaperonin GroES, found in Bacillus licheniformis (strain ATCC 14580 / DSM 13 / JCM 2505 / CCUG 7422 / NBRC 12200 / NCIMB 9375 / NCTC 10341 / NRRL NRS-1264 / Gibson 46).